The chain runs to 507 residues: MGSKKKCFDGSRDGISGLPDAMICHILSFLPTKVAASTTVLAKRWKPLLAFMPNLDFDESFRFDPRMTCEERRKGSESFMLVVDSVLALQAEANATLNKFYVKCEGVEQNSVLEWIPKVLKRGVLDIDLQIPSSRGFGSNSTFYPLPSEIFVSKTLVRLKIQFQDGANVNVEGDVSLPMLKTLHLDYVKMDTRMLQKLLSGCHTLEELLLMNLIWKESSEPEPCFVSVSVRTLKILKFSRFENFMKAKDFKPIVLLSFDIPNLVYLEYLDTIADKYEQVRFDSLVKASIGLCKTSKQIENDNNNVTKLFMGICNVTILYLTEDTLKVLGCCRETMPVFENLIHLTIRTGVHIGWKSLPHLLKNCPNLQTLVFEGMHHIYRKGRACGDVDEDGTCMCKNLDNMRVKKDIDACLSSSPVKVIKILNFGELCGFCEFCDVEEDVAGQIKQVKQFLETMPDLEKVILYYNTPEDEDVMKVFKKLKKLPRVASAKCEVQIISDNINLSFTFR.

One can recognise an F-box domain in the interval 12–60; sequence RDGISGLPDAMICHILSFLPTKVAASTTVLAKRWKPLLAFMPNLDFDES. 5 LRR repeats span residues 135–163, 187–212, 214–240, 317–348, and 349–374; these read RGFG…KIQF, YVKM…LLMN, IWKE…KFSR, ILYL…TIRT, and GVHI…VFEG.

The polypeptide is Putative F-box/LRR-repeat protein At4g00320 (Arabidopsis thaliana (Mouse-ear cress)).